The following is a 79-amino-acid chain: Protein NOI4 (79 aa).

Positions 31–68 (KARDEKKTGGKPGSPGKSSEGHVKSGGGDPSKPQPKKW) are disordered. Ser-44 is subject to Phosphoserine.

The protein belongs to the RIN4 family. Proteolytic cleaved by P.syringae pv tomato AvrRpt2 after Gly-12; this cleavage is critical for subsequent proteasome-dependent elimination.

This chain is Protein NOI4, found in Arabidopsis thaliana (Mouse-ear cress).